Consider the following 631-residue polypeptide: Phosphomethylpyrimidine synthase (631 aa).

Residues asparagine 239, methionine 268, tyrosine 297, histidine 333, 353–355 (SRG), 394–397 (DGLR), and glutamate 433 each bind substrate. Histidine 437 is a Zn(2+) binding site. Tyrosine 460 serves as a coordination point for substrate. A Zn(2+)-binding site is contributed by histidine 501. Positions 581, 584, and 589 each coordinate [4Fe-4S] cluster.

The protein belongs to the ThiC family. As to quaternary structure, homodimer. The cofactor is [4Fe-4S] cluster.

It catalyses the reaction 5-amino-1-(5-phospho-beta-D-ribosyl)imidazole + S-adenosyl-L-methionine = 4-amino-2-methyl-5-(phosphooxymethyl)pyrimidine + CO + 5'-deoxyadenosine + formate + L-methionine + 3 H(+). Its pathway is cofactor biosynthesis; thiamine diphosphate biosynthesis. Catalyzes the synthesis of the hydroxymethylpyrimidine phosphate (HMP-P) moiety of thiamine from aminoimidazole ribotide (AIR) in a radical S-adenosyl-L-methionine (SAM)-dependent reaction. This is Phosphomethylpyrimidine synthase from Escherichia coli O8 (strain IAI1).